A 332-amino-acid chain; its full sequence is Delta-aminolevulinic acid dehydratase (332 aa).

Residue K199 is the Schiff-base intermediate with substrate of the active site. 5-aminolevulinate contacts are provided by R209 and K221. E237 contacts Mg(2+). The Schiff-base intermediate with substrate role is filled by K252. Positions 278 and 317 each coordinate 5-aminolevulinate.

It belongs to the ALAD family. As to quaternary structure, homooctamer.

The enzyme catalyses 2 5-aminolevulinate = porphobilinogen + 2 H2O + H(+). It participates in porphyrin-containing compound metabolism; protoporphyrin-IX biosynthesis; coproporphyrinogen-III from 5-aminolevulinate: step 1/4. In terms of biological role, catalyzes an early step in the biosynthesis of tetrapyrroles. Binds two molecules of 5-aminolevulinate per subunit, each at a distinct site, and catalyzes their condensation to form porphobilinogen. The polypeptide is Delta-aminolevulinic acid dehydratase (hemB) (Chlamydia pneumoniae (Chlamydophila pneumoniae)).